The chain runs to 492 residues: Ketol-acid reductoisomerase (NADP(+)) (492 aa).

In terms of domain architecture, KARI N-terminal Rossmann spans 15–208 (AQLGKCRFMA…GGDRAGVLES (194 aa)). NADP(+) contacts are provided by residues 45–48 (CGAQ), arginine 68, arginine 76, serine 78, and 108–110 (DKQ). Residue histidine 132 is part of the active site. Residue glycine 158 coordinates NADP(+). KARI C-terminal knotted domains follow at residues 209–344 (SFVA…KAPP) and 345–485 (FEGK…MTDM). Aspartate 217, glutamate 221, glutamate 389, and glutamate 393 together coordinate Mg(2+). Serine 414 serves as a coordination point for substrate.

Belongs to the ketol-acid reductoisomerase family. The cofactor is Mg(2+).

The enzyme catalyses (2R)-2,3-dihydroxy-3-methylbutanoate + NADP(+) = (2S)-2-acetolactate + NADPH + H(+). It catalyses the reaction (2R,3R)-2,3-dihydroxy-3-methylpentanoate + NADP(+) = (S)-2-ethyl-2-hydroxy-3-oxobutanoate + NADPH + H(+). It functions in the pathway amino-acid biosynthesis; L-isoleucine biosynthesis; L-isoleucine from 2-oxobutanoate: step 2/4. It participates in amino-acid biosynthesis; L-valine biosynthesis; L-valine from pyruvate: step 2/4. Involved in the biosynthesis of branched-chain amino acids (BCAA). Catalyzes an alkyl-migration followed by a ketol-acid reduction of (S)-2-acetolactate (S2AL) to yield (R)-2,3-dihydroxy-isovalerate. In the isomerase reaction, S2AL is rearranged via a Mg-dependent methyl migration to produce 3-hydroxy-3-methyl-2-ketobutyrate (HMKB). In the reductase reaction, this 2-ketoacid undergoes a metal-dependent reduction by NADPH to yield (R)-2,3-dihydroxy-isovalerate. The protein is Ketol-acid reductoisomerase (NADP(+)) of Edwardsiella ictaluri (strain 93-146).